A 618-amino-acid polypeptide reads, in one-letter code: MSFLVLPPEVNSALMFAGAGSGPTLAAAAAWDGLAAELGQAANSFSSATAALADTAWQGPAATAMAAAAAPYASWLSTAATRALSAAAQAKAAAAVYEAARAATVDPLLVAANRHQLVSLVLSNLFGQNAPAIAATEAAYEQLWAADVAAMVSYHSGASAVAAQLAPWAQAVRALPNPTAPALASGPAALAIPALGIGNTGIGNIFSIGNIGDYNLGNGNTGNANLGSGNTGQANLGSGNTGFFNFGSGNTANTNFGSGNLGNLNLGSGNDGNGNFGLGNIGDGNRGSGNVGSFNFGTANAGSFNVGSANHGSPNVGFANLGNNNLGIANLGNNNLGIANLGNNNIGIGLTGDNMIGIGALNSGIGNLGFGNSGNNNIGLFNSGNNNIGFFNSGDSNFGFFNSGDTNTGFGNAGFTNTGFGNAGSGNFGFGNAGNNNFGFGNSGFENMGVGNSGAYNTGSFNSGTLNTGDLNSGDFNTGWANSGDINTGGFHSGDLNTGFGSPVDQPVMNSGFGNIGTGNSGFNNSGDANSGFQNTNTGAFFIGHSGLLNSGGGQHVGISNSGTGFNTGLFNTGFNNTGIGNSATNAAFTTTSGVANSGDNSSGGFNAGNDQSGFFDG.

The first 29 residues, 1–29 (MSFLVLPPEVNSALMFAGAGSGPTLAAAA), serve as a signal peptide directing secretion. The interval 598–618 (SGDNSSGGFNAGNDQSGFFDG) is disordered.

Belongs to the mycobacterial PPE family.

This is an uncharacterized protein from Mycobacterium tuberculosis (strain ATCC 25618 / H37Rv).